The following is a 398-amino-acid chain: Nicotinate phosphoribosyltransferase (398 aa).

Residue His214 is modified to Phosphohistidine; by autocatalysis.

This sequence belongs to the NAPRTase family. Transiently phosphorylated on a His residue during the reaction cycle. Phosphorylation strongly increases the affinity for substrates and increases the rate of nicotinate D-ribonucleotide production. Dephosphorylation regenerates the low-affinity form of the enzyme, leading to product release.

The catalysed reaction is nicotinate + 5-phospho-alpha-D-ribose 1-diphosphate + ATP + H2O = nicotinate beta-D-ribonucleotide + ADP + phosphate + diphosphate. It participates in cofactor biosynthesis; NAD(+) biosynthesis; nicotinate D-ribonucleotide from nicotinate: step 1/1. Functionally, catalyzes the synthesis of beta-nicotinate D-ribonucleotide from nicotinate and 5-phospho-D-ribose 1-phosphate at the expense of ATP. The polypeptide is Nicotinate phosphoribosyltransferase (Xanthomonas campestris pv. campestris (strain B100)).